A 437-amino-acid chain; its full sequence is Oxysterol-binding protein homolog 7 (437 aa).

Residues 23–32 (IASNAANSKP) show a composition bias toward polar residues. Residues 23 to 42 (IASNAANSKPSGADTDDIDE) are disordered. The interval 54–393 (IISQLKPGCD…EDLDYYIYKH (340 aa)) is OSBP-related domain (ORD). A 1,2-diacyl-sn-glycero-3-phospho-(1D-myo-inositol 4-phosphate)-binding positions include 64–69 (LSRITL), 126–129 (KPLN), and 157–158 (HH). A 1,2-diacyl-sn-glycero-3-phospho-L-serine contacts are provided by residues 64–69 (LSRITL) and N129. S183 contributes to the a 1,2-diacyl-sn-glycero-3-phospho-L-serine binding site. K276 is covalently cross-linked (Glycyl lysine isopeptide (Lys-Gly) (interchain with G-Cter in ubiquitin)). A 1,2-diacyl-sn-glycero-3-phospho-(1D-myo-inositol 4-phosphate)-binding residues include K351, E355, and R359.

It belongs to the OSBP family. Interacts with the AAA ATPase VPS4; regulates OSH7 membrane association. VPS4 is required for membrane dissociation of OSH7.

Its subcellular location is the cytoplasm. The protein resides in the cell membrane. The protein localises to the endoplasmic reticulum membrane. The catalysed reaction is a 1,2-diacyl-sn-glycero-3-phospho-L-serine(in) = a 1,2-diacyl-sn-glycero-3-phospho-L-serine(out). Its function is as follows. ipid transport protein (LTP) involved in non-vesicular transfer of lipids between membranes. Functions in phosphoinositide-coupled directional transport of various lipids by carrying the lipid molecule in a hydrophobic pocket and transferring it between membranes through the cytosol. Involved in maintenance of intracellular sterol distribution and homeostasis. Involved in lipid countertransport between the endoplasmic reticulum and the plasma membrane. Specifically exchanges phosphatidylserine with phosphatidylinositol 4-phosphate (PI4P), delivering phosphatidylserine to the PM in exchange for PI4P, which is delivered to the ER-localized PI4P phosphatase SAC1 for degradation. Thus, by maintaining a PI4P gradient at the ER/PM interface, SAC1 drives PS transport. Binds phosphatidylserine and PI4P in a mutually exclusive manner. The sequence is that of Oxysterol-binding protein homolog 7 from Saccharomyces cerevisiae (strain ATCC 204508 / S288c) (Baker's yeast).